Consider the following 322-residue polypeptide: Cysteine protease yopT1 (322 aa).

The segment at 42-69 (LSHSNRQKKLSATIKHNQSSRSMLDRKL) is disordered. Catalysis depends on residues Cys139, His258, and Asp274.

This sequence belongs to the peptidase C58 family. Interacts with human ARHA.

Its subcellular location is the secreted. Cysteine protease, which is translocated into infected cells and plays a central role in pathogenesis by cleaving the C-terminus end of the human small GTPase RhoA/ARHA, a regulator of cytoskeleton. Once cleaved, ARHA loses its lipid modification, and is released from the cell membrane, leading to the subsequent disruption of actin cytoskeleton of the host cell. This Yersinia enterocolitica serotype O:8 / biotype 1B (strain NCTC 13174 / 8081) protein is Cysteine protease yopT1 (yopT1).